The primary structure comprises 639 residues: Carbon monoxide dehydrogenase (639 aa).

The [4Fe-4S] cluster site is built by C41, C49, C50, C53, C58, and C72. [Ni-4Fe-4S] cluster is bound by residues H265, C300, C338, C451, C481, and C531.

It belongs to the Ni-containing carbon monoxide dehydrogenase family. In terms of assembly, homodimer. [4Fe-4S] cluster is required as a cofactor. [Ni-4Fe-4S] cluster serves as cofactor.

The protein resides in the cytoplasm. The protein localises to the cell inner membrane. The enzyme catalyses CO + 2 oxidized [2Fe-2S]-[ferredoxin] + H2O = 2 reduced [2Fe-2S]-[ferredoxin] + CO2 + 2 H(+). Its function is as follows. Allows growth in a CO-dependent manner in the dark. CODH oxidizes carbon monoxide coupled, via CooF, to the reduction of a hydrogen cation by a hydrogenase (possibly CooH). The protein is Carbon monoxide dehydrogenase (cooS) of Rhodospirillum rubrum.